A 639-amino-acid polypeptide reads, in one-letter code: 3D-(3,5/4)-trihydroxycyclohexane-1,2-dione hydrolase (639 aa).

Glu62 is a binding site for thiamine diphosphate. The tract at residues Ser438–Gly518 is thiamine pyrophosphate binding. Asp489 and Asn516 together coordinate Mg(2+).

Belongs to the TPP enzyme family. Requires Mg(2+) as cofactor. It depends on thiamine diphosphate as a cofactor.

It catalyses the reaction 3D-3,5/4-trihydroxycyclohexane-1,2-dione + H2O = 5-deoxy-D-glucuronate + H(+). Its pathway is polyol metabolism; myo-inositol degradation into acetyl-CoA; acetyl-CoA from myo-inositol: step 3/7. Involved in the cleavage of the C1-C2 bond of 3D-(3,5/4)-trihydroxycyclohexane-1,2-dione (THcHDO) to yield 5-deoxy-glucuronate (5DG). This is 3D-(3,5/4)-trihydroxycyclohexane-1,2-dione hydrolase from Clostridium perfringens (strain 13 / Type A).